The chain runs to 111 residues: Disintegrin subunit alpha (111 aa).

An N-terminal signal peptide occupies residues 1 to 20 (MIQVLLVTICLAVFPYQGSS). Positions 21 to 44 (IILESGNVNDYEVVYPRKITPLPK) are excised as a propeptide. Positions 45–111 (GAVQPKNPCC…GDCPRKHFYA (67 aa)) constitute a Disintegrin domain. Cystine bridges form between Cys-53/Cys-76, Cys-67/Cys-73, Cys-72/Cys-97, and Cys-85/Cys-104. The Cell attachment site motif lies at 89–91 (RGD). The propeptide occupies 110–111 (YA).

It belongs to the disintegrin family. Dimeric disintegrin subfamily. In terms of assembly, heterodimer with subunit beta; disulfide-linked. As to expression, expressed by the venom gland.

It localises to the secreted. Its function is as follows. Acts by binding to alpha-IIb/beta-3 (ITGA2B/ITGB3) on the platelet surface and inhibits both ADP-induced platelet aggregation and platelet aggregate dissociation in human platelet-rich plasma. This Agkistrodon piscivorus leucostoma (Western cottonmouth) protein is Disintegrin subunit alpha.